Consider the following 2479-residue polypeptide: Centrosomal protein of 290 kDa (2479 aa).

The interval 1-695 (MPPNINWKEI…IESKNAEGIF (695 aa)) is self-association (with itself or C-terminus). Coiled coils occupy residues 59-565 (MKMK…ERGK), 598-664 (SLKN…MQKD), 697-931 (ASLH…VCEK), 958-1027 (SLSE…IEQA), 1071-1498 (QRAE…ILSR), 1533-1584 (HTLK…LHIL), and 1635-2452 (DSLS…SEQL). Residues 149–163 (ALRNEEAENENSKLR) show a composition bias toward basic and acidic residues. The disordered stretch occupies residues 149 to 168 (ALRNEEAENENSKLRRENKR). The segment at 696–896 (DASLHLKAQV…TVLQVNEKSL (201 aa)) is interaction with IQCB1. A self-association (with itself or N-terminus) region spans residues 1966-2479 (TTGMTVDQVL…EESPVNFPIY (514 aa)). Residues 2458–2479 (SPVAASEEFEDEEESPVNFPIY) are disordered.

Part of the tectonic-like complex (also named B9 complex). Interacts with ATF4 via its N-terminal region. Associates with the BBSome complex, interacting (via N-terminus) with BBS4. Interacts with IQCB1/NPHP5; IQCB1 and CEP290/NPHP6 are proposed to form a functional NPHP5-6 module localized to the centrosome. Interacts with NPHP4; the interaction likely requires additional interactors. Interacts with ZNF423, FAM161A, CEP162, CEP162, CEP131, TALPID3, CCDC13, CC2D2A, RPGRIP1. Can self-associate (homo- or heteromeric). Interacts with CCP110; required for suppressing cilia formation. Interacts with RPGR. Associates (via C-terminus) with microtubules; association to microtubule is reduced in response to cellular stress, such as ultraviolet light (UV) radiation or heat shock, in a process that requires p38 MAP kinase signaling. Interacts with FAM161A. Interacts with PCM1. Interacts with CCDC66. Interacts with ARMC9 and CSPP1. In terms of processing, ubiquitinated. May undergo monoubiquitination; monoubiquitination is inhibited in response to cellular stress, such as ultraviolet light (UV) radiation or heat shock, but does not cause its displacement from centriolar satellites. Ubiquitous. Expressed strongly in placenta and weakly in brain.

Its subcellular location is the cytoplasm. The protein localises to the cytoskeleton. It is found in the microtubule organizing center. The protein resides in the centrosome. It localises to the centriolar satellite. Its subcellular location is the nucleus. The protein localises to the cell projection. It is found in the cilium. The protein resides in the cilium basal body. It localises to the centriole. Its subcellular location is the cytoplasmic vesicle. Its function is as follows. Involved in early and late steps in cilia formation. Its association with CCP110 is required for inhibition of primary cilia formation by CCP110. May play a role in early ciliogenesis in the disappearance of centriolar satellites and in the transition of primary ciliar vesicles (PCVs) to capped ciliary vesicles (CCVs). Required for the centrosomal recruitment of RAB8A and for the targeting of centriole satellite proteins to centrosomes such as of PCM1. Required for the correct localization of ciliary and phototransduction proteins in retinal photoreceptor cells; may play a role in ciliary transport processes. Required for efficient recruitment of RAB8A to primary cilium. In the ciliary transition zone is part of the tectonic-like complex which is required for tissue-specific ciliogenesis and may regulate ciliary membrane composition. Involved in regulation of the BBSome complex integrity, specifically for presence of BBS2, BBS5 and BBS8/TTC8 in the complex, and in ciliary targeting of selected BBSome cargos. May play a role in controlling entry of the BBSome complex to cilia possibly implicating IQCB1/NPHP5. Activates ATF4-mediated transcription. The protein is Centrosomal protein of 290 kDa (CEP290) of Homo sapiens (Human).